A 24-amino-acid polypeptide reads, in one-letter code: Prokineticin 1-like protein (24 aa).

Residues Cys-7 and Cys-19 are joined by a disulfide bond.

As to expression, expressed by the skin glands.

The protein resides in the secreted. In terms of biological role, stimulates insulin secretion by BRIN-BD11 cells in vitro. This Pelophylax saharicus (Sahara frog) protein is Prokineticin 1-like protein.